Consider the following 125-residue polypeptide: Small ribosomal subunit protein uS13 (125 aa).

Residues 94–125 (SLPVRGQRTRTNARTRKGKRKTVAGKKKAVKK) form a disordered region.

This sequence belongs to the universal ribosomal protein uS13 family. In terms of assembly, part of the 30S ribosomal subunit. Forms a loose heterodimer with protein S19. Forms two bridges to the 50S subunit in the 70S ribosome.

Its function is as follows. Located at the top of the head of the 30S subunit, it contacts several helices of the 16S rRNA. In the 70S ribosome it contacts the 23S rRNA (bridge B1a) and protein L5 of the 50S subunit (bridge B1b), connecting the 2 subunits; these bridges are implicated in subunit movement. Contacts the tRNAs in the A and P-sites. The polypeptide is Small ribosomal subunit protein uS13 (Chlorobium chlorochromatii (strain CaD3)).